We begin with the raw amino-acid sequence, 177 residues long: ALIVVGSIVDIAITEVNNAEENSRISITFFRLFRVMRLVKLLSRGEGIRTLLWTFIKSFQALPYVALLIVMLFFIYAVIGMQVFGKIALNDTTEINRNNNFQTFPQAVLLLFRCATGEAWQEIMLACLPDKKCDPDSEPANSTEADHSCGSSFAVFYFISFYMLCAFLIIDLFVAVI.

A helical membrane pass occupies residues 27 to 45 (ITFFRLFRVMRLVKLLSRG). Residues 64–84 (YVALLIVMLFFIYAVIGMQVF) form a helical membrane-spanning segment. Asn-90 carries an N-linked (GlcNAc...) asparagine glycan. Residues 107–125 (AVLLLFRCATGEAWQEIML) constitute an intramembrane region (pore-forming). The Selectivity filter of repeat IV signature appears at 116–119 (TGEA). The cysteines at positions 133 and 149 are disulfide-linked. Asn-141 carries N-linked (GlcNAc...) asparagine glycosylation. A helical membrane pass occupies residues 154–177 (AVFYFISFYMLCAFLIIDLFVAVI).

It belongs to the calcium channel alpha-1 subunit (TC 1.A.1.11) family. CACNA1C subfamily. Component of a calcium channel complex consisting of a pore-forming alpha subunit (CACNA1C) and ancillary beta, gamma and delta subunits. The channel complex contains alpha, beta, gamma and delta subunits in a 1:1:1:1 ratio, i.e. it contains only one of each type of subunit. CACNA1C channel activity is modulated by ancillary subunits, such as CACNB2, CACNB3, CACNA2D1 and CACNA2D4. In terms of processing, phosphorylation by PKA activates the channel.

It is found in the cell membrane. It localises to the perikaryon. The protein localises to the postsynaptic density membrane. The protein resides in the cell projection. Its subcellular location is the dendrite. It is found in the sarcolemma. It localises to the T-tubule. The catalysed reaction is Ca(2+)(in) = Ca(2+)(out). Its activity is regulated as follows. Inhibited by dihydropyridines (DHP), such as isradipine. Channel activity is regulated by Ca(2+) and calmodulin. In terms of biological role, pore-forming, alpha-1C subunit of the voltage-gated calcium channel that gives rise to L-type calcium currents. Mediates influx of calcium ions into the cytoplasm, and thereby triggers calcium release from the sarcoplasm. Plays an important role in excitation-contraction coupling in the heart. Required for normal heart development and normal regulation of heart rhythm. Required for normal contraction of smooth muscle cells in blood vessels and in the intestine. Essential for normal blood pressure regulation via its role in the contraction of arterial smooth muscle cells. Long-lasting (L-type) calcium channels belong to the 'high-voltage activated' (HVA) group. This is Voltage-dependent L-type calcium channel subunit alpha-1C (CACNA1C) from Gallus gallus (Chicken).